We begin with the raw amino-acid sequence, 131 residues long: Single-stranded DNA-binding protein 2 (131 aa).

The region spanning M1–E103 is the SSB domain. The Important for interaction with partner proteins signature appears at E126 to F131.

As to quaternary structure, homotetramer.

In terms of biological role, plays an important role in DNA replication, recombination and repair. Binds to ssDNA and to an array of partner proteins to recruit them to their sites of action during DNA metabolism. The sequence is that of Single-stranded DNA-binding protein 2 (ssb2) from Streptococcus agalactiae serotype III (strain NEM316).